A 187-amino-acid polypeptide reads, in one-letter code: MAESHATGTTTHTEVPHGKPEFPPFNKDTFASQLVSFAIAFALLYVIVSRFALPRVGGVIKTREGTIEKDLAEAQAFRDESDLALKAYETELAAARTRAQAIGSETRDTLAAQSDAERKAVELSLSAKLAEAEKTISDMRTKAMGNVKAIAADATSAIVQQLSGTAPDAQLIDRAVDASLKGGRDAA.

Residues 1 to 13 (MAESHATGTTTHT) are compositionally biased toward polar residues. The tract at residues 1–21 (MAESHATGTTTHTEVPHGKPE) is disordered. Residues 31 to 53 (ASQLVSFAIAFALLYVIVSRFAL) traverse the membrane as a helical segment.

Belongs to the ATPase B chain family. In terms of assembly, F-type ATPases have 2 components, F(1) - the catalytic core - and F(0) - the membrane proton channel. F(1) has five subunits: alpha(3), beta(3), gamma(1), delta(1), epsilon(1). F(0) has three main subunits: a(1), b(2) and c(10-14). The alpha and beta chains form an alternating ring which encloses part of the gamma chain. F(1) is attached to F(0) by a central stalk formed by the gamma and epsilon chains, while a peripheral stalk is formed by the delta and b chains.

The protein localises to the cell inner membrane. In terms of biological role, f(1)F(0) ATP synthase produces ATP from ADP in the presence of a proton or sodium gradient. F-type ATPases consist of two structural domains, F(1) containing the extramembraneous catalytic core and F(0) containing the membrane proton channel, linked together by a central stalk and a peripheral stalk. During catalysis, ATP synthesis in the catalytic domain of F(1) is coupled via a rotary mechanism of the central stalk subunits to proton translocation. Functionally, component of the F(0) channel, it forms part of the peripheral stalk, linking F(1) to F(0). The b'-subunit is a diverged and duplicated form of b found in plants and photosynthetic bacteria. In Afipia carboxidovorans (strain ATCC 49405 / DSM 1227 / KCTC 32145 / OM5) (Oligotropha carboxidovorans), this protein is ATP synthase subunit b 2 (atpF2).